Consider the following 283-residue polypeptide: Pantothenate synthetase (283 aa).

30-37 serves as a coordination point for ATP; it reads MGYFHEGH. His37 acts as the Proton donor in catalysis. A (R)-pantoate-binding site is contributed by Gln61. Gln61 lines the beta-alanine pocket. 147 to 150 contacts ATP; that stretch reads GEKD. Gln153 is a binding site for (R)-pantoate. ATP is bound by residues Val176 and 184 to 187; that span reads MSSR.

The protein belongs to the pantothenate synthetase family. As to quaternary structure, homodimer.

It is found in the cytoplasm. The catalysed reaction is (R)-pantoate + beta-alanine + ATP = (R)-pantothenate + AMP + diphosphate + H(+). It functions in the pathway cofactor biosynthesis; (R)-pantothenate biosynthesis; (R)-pantothenate from (R)-pantoate and beta-alanine: step 1/1. Its function is as follows. Catalyzes the condensation of pantoate with beta-alanine in an ATP-dependent reaction via a pantoyl-adenylate intermediate. This is Pantothenate synthetase from Syntrophobacter fumaroxidans (strain DSM 10017 / MPOB).